The primary structure comprises 233 residues: Pirin-like protein YhaK (233 aa).

It belongs to the pirin family. As to quaternary structure, monomer.

The protein resides in the cytoplasm. Does not have quercetin 2,3-dioxygenase activity. The chain is Pirin-like protein YhaK (yhaK) from Escherichia coli (strain K12).